The following is a 317-amino-acid chain: Probable deoxyhypusine synthase 1 (317 aa).

Lys-285 acts as the Nucleophile in catalysis.

Belongs to the deoxyhypusine synthase family. It depends on NAD(+) as a cofactor.

The catalysed reaction is [eIF5A protein]-L-lysine + spermidine = [eIF5A protein]-deoxyhypusine + propane-1,3-diamine. It functions in the pathway protein modification; eIF5A hypusination. Catalyzes the NAD-dependent oxidative cleavage of spermidine and the subsequent transfer of the butylamine moiety of spermidine to the epsilon-amino group of a specific lysine residue of the eIF-5A precursor protein to form the intermediate deoxyhypusine residue. This is Probable deoxyhypusine synthase 1 (dys1) from Methanosarcina mazei (strain ATCC BAA-159 / DSM 3647 / Goe1 / Go1 / JCM 11833 / OCM 88) (Methanosarcina frisia).